Reading from the N-terminus, the 656-residue chain is DNA ligase (656 aa).

NAD(+)-binding positions include 32–36 (DAVYD) and 81–82 (SL). The active-site N6-AMP-lysine intermediate is the K112. Residues R133, E167, and K306 each coordinate NAD(+). The Zn(2+) site is built by C400, C403, C416, and C421. A BRCT domain is found at 577 to 656 (KSSSVFNNKT…ELLKRLKELD (80 aa)).

It belongs to the NAD-dependent DNA ligase family. LigA subfamily. Mg(2+) is required as a cofactor. Requires Mn(2+) as cofactor.

The catalysed reaction is NAD(+) + (deoxyribonucleotide)n-3'-hydroxyl + 5'-phospho-(deoxyribonucleotide)m = (deoxyribonucleotide)n+m + AMP + beta-nicotinamide D-nucleotide.. DNA ligase that catalyzes the formation of phosphodiester linkages between 5'-phosphoryl and 3'-hydroxyl groups in double-stranded DNA using NAD as a coenzyme and as the energy source for the reaction. It is essential for DNA replication and repair of damaged DNA. The polypeptide is DNA ligase (Helicobacter pylori (strain P12)).